An 879-amino-acid chain; its full sequence is MKFMGANELREKYLSFFESKDHLRLQSFPLVPKNDKSLLLINAGMAPLKPYFTGLEEPPKRRITTCQKCIRTGDIENVGKTSRHGTFFEMLGNFSFGDYFKSEIIPWAWEFITETLGIPKDKLYVTIYLNDDEAYDIWTSKTDVDPSRIFRLGKDDNFWEIGVGPCGPCTEIHFDRGEGKVETVEEFLEASDADRIVEFWNLVFTQFDKDEEGNYNELAQKNIDTGMGLERIATIMQGVDNIFEIDTVKNILNKACELTNAKYGEDKDKDVSLRIITDHGKSVTFLICDGVQPSNEGRGYVLRRLLRRAARHGRLLGVKGIFLNEMVDAVVENYGEAYPELREKADYIKKIIKLEEERFNETIDSGMDILMSYISEMEEKNEKVLSGAKAFKLYDTYGFPLELTQEILEEKGLELDIENFNKEMKEQRERARNARGESSYMGSEESPVNKVDASIVTEFDGYVNLELNSKVIVLGNNEEFKAELKEGEEGFLLTDKTPFYAEMGGQVGDRGNITSETGMAIVTDCKKNVGGKFVHYIKVIEGSLKEGQEVKLSVDASRRSNICKNHTATHMLHEALKEVLGDHVNQSGSYVDEERLRFDFTHFAALTEEELEKVELLVNEKIMTVSVVDTKEMSLDEARNSGATCLFDEKYAEKVRVVSVGDFSKELCGGTHVANSGEIGLFKIVSESGVAAGIRRIEAVTGISALKFMELKNNMLKEAASMLKCNEKDIAKRIAAQAHELKEKDKEIAELKAKLVQGAEDDILKDKVEINGVELVTAELKDVDGNSLRDLADKVRNKLNNGIVVLASDNGGKVNLVAMATKNSLANGVHCGKVIKEVAAVVGGGGGGRPDMAQAGGKNPENIAKALEKAKEVVELLVK.

Residues His-566, His-570, Cys-668, and His-672 each coordinate Zn(2+).

Belongs to the class-II aminoacyl-tRNA synthetase family. It depends on Zn(2+) as a cofactor.

It is found in the cytoplasm. It catalyses the reaction tRNA(Ala) + L-alanine + ATP = L-alanyl-tRNA(Ala) + AMP + diphosphate. Its function is as follows. Catalyzes the attachment of alanine to tRNA(Ala) in a two-step reaction: alanine is first activated by ATP to form Ala-AMP and then transferred to the acceptor end of tRNA(Ala). Also edits incorrectly charged Ser-tRNA(Ala) and Gly-tRNA(Ala) via its editing domain. The sequence is that of Alanine--tRNA ligase from Clostridium perfringens (strain 13 / Type A).